The chain runs to 873 residues: Alanine--tRNA ligase (873 aa).

Positions 562, 566, 666, and 670 each coordinate Zn(2+).

Belongs to the class-II aminoacyl-tRNA synthetase family. Zn(2+) is required as a cofactor.

It localises to the cytoplasm. The enzyme catalyses tRNA(Ala) + L-alanine + ATP = L-alanyl-tRNA(Ala) + AMP + diphosphate. Functionally, catalyzes the attachment of alanine to tRNA(Ala) in a two-step reaction: alanine is first activated by ATP to form Ala-AMP and then transferred to the acceptor end of tRNA(Ala). Also edits incorrectly charged Ser-tRNA(Ala) and Gly-tRNA(Ala) via its editing domain. This is Alanine--tRNA ligase from Dichelobacter nodosus (strain VCS1703A).